We begin with the raw amino-acid sequence, 259 residues long: MAVGKNKRISKGKKGGKKKASDPFAKKDWYDIKAPTMFTVRNVGKTLVTRTQGTKIASEALKGRVFEVSLADLQKNEDDAFRKMRLRVEDVQGRNCLTNFWGMDFTTDKLRSLVRKWQTLIEAHVDVKTTDGYTLRVFCISFTKKRQGQIKRTCYAQSAQIRQIRKKMMEIITREATSCDLKELVAKFIPESIGKDIEKSCQGIYPLQNTFIRKVKVLKAPKFDITKLMEVHGDYSEEVGAKIERPAAAAPAVEEAATA.

A compositionally biased stretch (basic residues) spans 1-18 (MAVGKNKRISKGKKGGKK). Positions 1-22 (MAVGKNKRISKGKKGGKKKASD) are disordered.

The protein belongs to the eukaryotic ribosomal protein eS1 family. As to quaternary structure, component of the small ribosomal subunit. Mature ribosomes consist of a small (40S) and a large (60S) subunit. The 40S subunit contains about 33 different proteins and 1 molecule of RNA (18S). The 60S subunit contains about 49 different proteins and 3 molecules of RNA (25S, 5.8S and 5S).

The protein localises to the cytoplasm. The sequence is that of Small ribosomal subunit protein eS1 from Chlamydomonas reinhardtii (Chlamydomonas smithii).